The primary structure comprises 101 residues: UPF0473 protein SUB1774 (101 aa).

The protein belongs to the UPF0473 family.

This chain is UPF0473 protein SUB1774, found in Streptococcus uberis (strain ATCC BAA-854 / 0140J).